Consider the following 287-residue polypeptide: UBX domain-containing protein 1 (287 aa).

Residues 1-42 (MAECSTLESLIEMGFSPSRAEKALAATGNQGIEPAMDWLVEH) form the UBA domain. Positions 44–207 (DDPDIDEPSV…VQEPPTKKEY (164 aa)) are disordered. Basic and acidic residues-rich tracts occupy residues 72–114 (CEER…EQEK) and 129–169 (KIQE…ERAR). A coiled-coil region spans residues 72–164 (CEERLPLTEE…RVREKIARDK (93 aa)). Residues 176–197 (SEPISPPAEASIPATTPSPSSP) show a composition bias toward low complexity. Positions 205–284 (KEYDQCRIQV…GLVPSAVLIV (80 aa)) constitute a UBX domain.

The protein resides in the cytoplasm. Functionally, component of a complex required to couple deglycosylation and proteasome-mediated degradation of misfolded proteins in the endoplasmic reticulum that are retrotranslocated in the cytosol. Involved in ubiquitin-proteasome systems. This Xenopus tropicalis (Western clawed frog) protein is UBX domain-containing protein 1 (ubxn1).